We begin with the raw amino-acid sequence, 187 residues long: Rusticyanin (187 aa).

Positions 1–32 (MYTQNTMKKNWYVTVGAAAALAATVGMGTAMA) are cleaved as a signal peptide. Residues 85-187 (SFEVHDKKNP…TGMFGKIIVK (103 aa)) form the Plastocyanin-like domain. 4 residues coordinate Cu cation: His-117, Cys-170, His-175, and Met-180.

In terms of assembly, monomer. Requires Cu cation as cofactor.

Its subcellular location is the periplasm. In terms of biological role, electron carrier from cytochrome c552 to the A-type oxidase. In Acidithiobacillus ferridurans, this protein is Rusticyanin (rus).